Reading from the N-terminus, the 739-residue chain is Phosphoribosylformylglycinamidine synthase subunit PurL (739 aa).

Residue H54 is part of the active site. Positions 57 and 96 each coordinate ATP. Position 98 (E98) interacts with Mg(2+). Residues 99-102 (SHNH) and R121 each bind substrate. The Proton acceptor role is filled by H100. D122 lines the Mg(2+) pocket. A substrate-binding site is contributed by Q245. A Mg(2+)-binding site is contributed by D273. Position 317-319 (317-319 (ESQ)) interacts with substrate. The ATP site is built by D500 and G537. N538 serves as a coordination point for Mg(2+). S540 contributes to the substrate binding site.

It belongs to the FGAMS family. As to quaternary structure, monomer. Part of the FGAM synthase complex composed of 1 PurL, 1 PurQ and 2 PurS subunits.

It localises to the cytoplasm. The enzyme catalyses N(2)-formyl-N(1)-(5-phospho-beta-D-ribosyl)glycinamide + L-glutamine + ATP + H2O = 2-formamido-N(1)-(5-O-phospho-beta-D-ribosyl)acetamidine + L-glutamate + ADP + phosphate + H(+). Its pathway is purine metabolism; IMP biosynthesis via de novo pathway; 5-amino-1-(5-phospho-D-ribosyl)imidazole from N(2)-formyl-N(1)-(5-phospho-D-ribosyl)glycinamide: step 1/2. Part of the phosphoribosylformylglycinamidine synthase complex involved in the purines biosynthetic pathway. Catalyzes the ATP-dependent conversion of formylglycinamide ribonucleotide (FGAR) and glutamine to yield formylglycinamidine ribonucleotide (FGAM) and glutamate. The FGAM synthase complex is composed of three subunits. PurQ produces an ammonia molecule by converting glutamine to glutamate. PurL transfers the ammonia molecule to FGAR to form FGAM in an ATP-dependent manner. PurS interacts with PurQ and PurL and is thought to assist in the transfer of the ammonia molecule from PurQ to PurL. In Bacillus mycoides (strain KBAB4) (Bacillus weihenstephanensis), this protein is Phosphoribosylformylglycinamidine synthase subunit PurL.